Here is a 217-residue protein sequence, read N- to C-terminus: Adenylate kinase (217 aa).

10–15 (GAGKGT) contacts ATP. The tract at residues 30-59 (STGDIFRKNISDKTPLGIEAKEYLDKGQLV) is NMP. AMP-binding positions include threonine 31, arginine 36, 57 to 59 (QLV), 85 to 88 (GFPR), and glutamine 92. The interval 126–163 (GRRICPSCGASYHVKFNPPKLKDKCDICNNDIIQRKDD) is LID. Arginine 127 lines the ATP pocket. Zn(2+)-binding residues include cysteine 130 and cysteine 133. Residue 136 to 137 (SY) participates in ATP binding. Residues cysteine 150 and cysteine 153 each coordinate Zn(2+). Positions 160 and 171 each coordinate AMP. Glycine 199 is an ATP binding site.

It belongs to the adenylate kinase family. As to quaternary structure, monomer.

It is found in the cytoplasm. It carries out the reaction AMP + ATP = 2 ADP. It participates in purine metabolism; AMP biosynthesis via salvage pathway; AMP from ADP: step 1/1. Functionally, catalyzes the reversible transfer of the terminal phosphate group between ATP and AMP. Plays an important role in cellular energy homeostasis and in adenine nucleotide metabolism. The polypeptide is Adenylate kinase (Clostridium kluyveri (strain NBRC 12016)).